Consider the following 695-residue polypeptide: Transketolase (695 aa).

H37 provides a ligand contact to substrate. Thiamine diphosphate-binding positions include H77 and 126 to 128; that span reads GPL. Residue D164 participates in Mg(2+) binding. Thiamine diphosphate is bound by residues G165 and N194. Mg(2+)-binding residues include N194 and I196. Substrate-binding residues include H268, R361, and S388. H268 contributes to the thiamine diphosphate binding site. Catalysis depends on E415, which acts as the Proton donor. F441 contacts thiamine diphosphate. Positions 465, 473, and 524 each coordinate substrate.

It belongs to the transketolase family. Homodimer. Requires Mg(2+) as cofactor. Ca(2+) is required as a cofactor. It depends on Mn(2+) as a cofactor. Co(2+) serves as cofactor. The cofactor is thiamine diphosphate.

The enzyme catalyses D-sedoheptulose 7-phosphate + D-glyceraldehyde 3-phosphate = aldehydo-D-ribose 5-phosphate + D-xylulose 5-phosphate. It participates in carbohydrate biosynthesis; Calvin cycle. Functionally, catalyzes the transfer of a two-carbon ketol group from a ketose donor to an aldose acceptor, via a covalent intermediate with the cofactor thiamine pyrophosphate. The sequence is that of Transketolase (cbbT) from Sinorhizobium medicae (strain WSM419) (Ensifer medicae).